Reading from the N-terminus, the 231-residue chain is UPF0702 transmembrane protein YetF (231 aa).

The next 3 helical transmembrane spans lie at 5 to 25 (LSVAVELVCGLGILFIILKLL), 33 to 53 (ITPFDFISALILGELVGNAVY), and 59 to 79 (IKEIIFASLLWGVLIYIIEFI).

This sequence belongs to the UPF0702 family.

It localises to the cell membrane. This is UPF0702 transmembrane protein YetF (yetF) from Bacillus subtilis (strain 168).